The following is a 93-amino-acid chain: Chromosomal protein MC1 (93 aa).

The disordered stretch occupies residues 1-43 (SNTRNFVLRDEEGNEHGVFTGKQPRQAALKAANRGDGTKSNPD).

In terms of biological role, protects DNA against thermal denaturation and modulates transcription. The chain is Chromosomal protein MC1 from Methanosarcina barkeri.